A 272-amino-acid chain; its full sequence is DNA repair protein RecO (272 aa).

The protein belongs to the RecO family.

Functionally, involved in DNA repair and RecF pathway recombination. In Latilactobacillus sakei subsp. sakei (strain 23K) (Lactobacillus sakei subsp. sakei), this protein is DNA repair protein RecO.